A 196-amino-acid chain; its full sequence is ATP-dependent Clp protease proteolytic subunit (196 aa).

Residue serine 101 is the Nucleophile of the active site. Histidine 126 is a catalytic residue.

This sequence belongs to the peptidase S14 family. Component of the chloroplastic Clp protease core complex.

Its subcellular location is the plastid. It is found in the chloroplast stroma. The catalysed reaction is Hydrolysis of proteins to small peptides in the presence of ATP and magnesium. alpha-casein is the usual test substrate. In the absence of ATP, only oligopeptides shorter than five residues are hydrolyzed (such as succinyl-Leu-Tyr-|-NHMec, and Leu-Tyr-Leu-|-Tyr-Trp, in which cleavage of the -Tyr-|-Leu- and -Tyr-|-Trp bonds also occurs).. In terms of biological role, cleaves peptides in various proteins in a process that requires ATP hydrolysis. Has a chymotrypsin-like activity. Plays a major role in the degradation of misfolded proteins. The polypeptide is ATP-dependent Clp protease proteolytic subunit (Nasturtium officinale (Watercress)).